Here is a 725-residue protein sequence, read N- to C-terminus: Methionine--tRNA ligase (725 aa).

The short motif at 27–37 is the 'HIGH' region element; sequence PYANGQIHIGH. Zn(2+) is bound by residues C158, C161, C171, and C174. Residues 348–352 carry the 'KMSKS' region motif; the sequence is KMSKS. Position 351 (K351) interacts with ATP. Residues 619–725 enclose the tRNA-binding domain; sequence DFAKIDLRIA…SGAKPGMRVK (107 aa).

This sequence belongs to the class-I aminoacyl-tRNA synthetase family. MetG type 1 subfamily. Homodimer. Zn(2+) serves as cofactor.

It is found in the cytoplasm. It carries out the reaction tRNA(Met) + L-methionine + ATP = L-methionyl-tRNA(Met) + AMP + diphosphate. Is required not only for elongation of protein synthesis but also for the initiation of all mRNA translation through initiator tRNA(fMet) aminoacylation. This chain is Methionine--tRNA ligase, found in Burkholderia pseudomallei (strain 1106a).